The following is an 881-amino-acid chain: Leucine--tRNA ligase (881 aa).

The 'HIGH' region signature appears at 48 to 58; the sequence is PYPSGKLHMGH. A 'KMSKS' region motif is present at residues 638 to 642; sequence KMSKS. Lys641 is a binding site for ATP.

The protein belongs to the class-I aminoacyl-tRNA synthetase family.

The protein resides in the cytoplasm. The enzyme catalyses tRNA(Leu) + L-leucine + ATP = L-leucyl-tRNA(Leu) + AMP + diphosphate. The chain is Leucine--tRNA ligase from Janthinobacterium sp. (strain Marseille) (Minibacterium massiliensis).